Reading from the N-terminus, the 1538-residue chain is Phenolphthiocerol/phthiocerol polyketide synthase subunit B (1538 aa).

Residues 33–455 form the Ketosynthase family 3 (KS3) domain; sequence AEPVAVVGIG…GTNAHVIIEQ (423 aa). Catalysis depends on for beta-ketoacyl synthase activity residues Cys205, His340, and His377. Positions 553-882 are acyltransferase; sequence DGSPGPGTVF…TNLYTADIAH (330 aa). Catalysis depends on Ser649, which acts as the For malonyltransferase activity. NADP(+) is bound at residue 1153 to 1196; sequence SQLVIGATGNIGPHLIRQLARMGAKTIVAMARKPGALDELTQCL. Residues 1153–1328 are beta-ketoacyl reductase; the sequence is SQLVIGATGN…TVVDWGLWKS (176 aa). The 76-residue stretch at 1423 to 1498 folds into the Carrier domain; it reads DMLFDHVGAL…SLTDYLATVL (76 aa). Position 1458 is an O-(pantetheine 4'-phosphoryl)serine (Ser1458).

The cofactor is NADP(+). Pantetheine 4'-phosphate serves as cofactor.

The catalysed reaction is icosanoyl-[(phenol)carboxyphthiodiolenone synthase] + 2 (S)-methylmalonyl-CoA + 3 malonyl-CoA + 5 NADPH + 10 H(+) = C32-carboxyphthiodiolenone-[(phenol)carboxyphthiodiolenone synthase] + 5 CO2 + 5 NADP(+) + 5 CoA + 2 H2O. It carries out the reaction docosanoyl-[(phenol)carboxyphthiodiolenone synthase] + 2 (S)-methylmalonyl-CoA + 3 malonyl-CoA + 5 NADPH + 10 H(+) = C34-carboxyphthiodiolenone-[(phenol)carboxyphthiodiolenone synthase] + 5 CO2 + 5 NADP(+) + 5 CoA + 2 H2O. The enzyme catalyses 17-(4-hydroxyphenyl)heptadecanoyl-[(phenol)carboxyphthiodiolenone synthase] + 2 (S)-methylmalonyl-CoA + 3 malonyl-CoA + 5 NADPH + 10 H(+) = C35-(phenol)carboxyphthiodiolenone-[(phenol)carboxyphthiodiolenone synthase] + 5 CO2 + 5 NADP(+) + 5 CoA + 2 H2O. It catalyses the reaction 19-(4-hydroxyphenyl)nonadecanoyl-[(phenol)carboxyphthiodiolenone synthase] + 2 (S)-methylmalonyl-CoA + 3 malonyl-CoA + 5 NADPH + 10 H(+) = C37-(phenol)carboxyphthiodiolenone-[(phenol)carboxyphthiodiolenone synthase] + 5 CO2 + 5 NADP(+) + 5 CoA + 2 H2O. It participates in lipid metabolism; fatty acid biosynthesis. Its function is as follows. Part of the PpsABCDE complex involved in the biosynthesis of the lipid core common to phthiocerols and phenolphthiocerols by successive additions of malonyl-CoA or methylmalonyl-CoA extender units. PpsA can accept as substrate the activated forms of either icosanoyl (C20), docosanoyl (C22) or lignoceroyl (C24) groups from FadD26, or a (4-hydroxyphenyl)-C17 or (4-hydroxyphenyl)-C19 fatty acyl from FadD29. PpsA initiates the biosynthesis and extends its substrate using a malonyl-CoA extender unit. The PpsB and PpsC proteins add the second and third malonyl-CoA extender units. PpsD adds an (R)-methylmalonyl unit and PpsE adds a second (R)-methylmalonyl unit. The incorporation of the methylmalonyl units results in formation of two branched methyl groups in the elongated product. This is Phenolphthiocerol/phthiocerol polyketide synthase subunit B (ppsB) from Mycobacterium bovis (strain ATCC BAA-935 / AF2122/97).